The chain runs to 177 residues: Cyclic pyranopterin monophosphate synthase (177 aa).

Residues 89–91 (LCH) and 125–126 (ME) contribute to the substrate site. Aspartate 140 is a catalytic residue.

It belongs to the MoaC family. As to quaternary structure, homohexamer; trimer of dimers.

The enzyme catalyses (8S)-3',8-cyclo-7,8-dihydroguanosine 5'-triphosphate = cyclic pyranopterin phosphate + diphosphate. Its pathway is cofactor biosynthesis; molybdopterin biosynthesis. Functionally, catalyzes the conversion of (8S)-3',8-cyclo-7,8-dihydroguanosine 5'-triphosphate to cyclic pyranopterin monophosphate (cPMP). This chain is Cyclic pyranopterin monophosphate synthase, found in Streptomyces griseus subsp. griseus (strain JCM 4626 / CBS 651.72 / NBRC 13350 / KCC S-0626 / ISP 5235).